The following is a 93-amino-acid chain: Large ribosomal subunit protein uL23 (93 aa).

Belongs to the universal ribosomal protein uL23 family. In terms of assembly, part of the 50S ribosomal subunit. Contacts protein L29, and trigger factor when it is bound to the ribosome.

Functionally, one of the early assembly proteins it binds 23S rRNA. One of the proteins that surrounds the polypeptide exit tunnel on the outside of the ribosome. Forms the main docking site for trigger factor binding to the ribosome. In Opitutus terrae (strain DSM 11246 / JCM 15787 / PB90-1), this protein is Large ribosomal subunit protein uL23.